The sequence spans 161 residues: MAKQSGIKWLWLSLVVITLDLFSKYLVVERFELYESINILPIFNLTYARNYGAAFSFLADHSGWQKYLFLTLAIIISFILANVLRRNQIDQKRENMAYALIIGGAIGNAIDRAYRGYVVDFFDFYWHIYHYPVFNIADVAIVMGAGLLILETFLDKKKKSD.

3 helical membrane passes run 9-29 (WLWLSLVVITLDLFSKYLVVE), 64-84 (WQKYLFLTLAIIISFILANVL), and 96-113 (MAYALIIGGAIGNAIDRA). Catalysis depends on residues Asp120 and Asp138. The helical transmembrane segment at 133 to 153 (VFNIADVAIVMGAGLLILETF) threads the bilayer.

Belongs to the peptidase A8 family.

The protein resides in the cell inner membrane. The enzyme catalyses Release of signal peptides from bacterial membrane prolipoproteins. Hydrolyzes -Xaa-Yaa-Zaa-|-(S,diacylglyceryl)Cys-, in which Xaa is hydrophobic (preferably Leu), and Yaa (Ala or Ser) and Zaa (Gly or Ala) have small, neutral side chains.. It participates in protein modification; lipoprotein biosynthesis (signal peptide cleavage). Its function is as follows. This protein specifically catalyzes the removal of signal peptides from prolipoproteins. In Haemophilus ducreyi (strain 35000HP / ATCC 700724), this protein is Lipoprotein signal peptidase.